The primary structure comprises 143 residues: Large-conductance mechanosensitive channel (143 aa).

The next 3 membrane-spanning stretches (helical) occupy residues Phe-10–Gly-30, Val-40–Val-60, and Gly-86–Val-106.

Belongs to the MscL family. As to quaternary structure, homopentamer.

The protein localises to the cell inner membrane. Functionally, channel that opens in response to stretch forces in the membrane lipid bilayer. May participate in the regulation of osmotic pressure changes within the cell. The chain is Large-conductance mechanosensitive channel from Paracidovorax citrulli (strain AAC00-1) (Acidovorax citrulli).